The sequence spans 122 residues: Succinate dehydrogenase assembly factor 3, mitochondrial (122 aa).

The N-terminal 47 residues, 1 to 47, are a transit peptide targeting the mitochondrion; that stretch reads MHPSVVRLVKPRRPERITSPILPPLPLYRAILRAHHRKLPQELRYLG.

It belongs to the complex I LYR family. SDHAF3 subfamily. In terms of assembly, interacts with the iron-sulfur protein subunit within the SDH catalytic dimer.

It is found in the mitochondrion matrix. In terms of biological role, plays an essential role in the assembly of succinate dehydrogenase (SDH), an enzyme complex (also referred to as respiratory complex II) that is a component of both the tricarboxylic acid (TCA) cycle and the mitochondrial electron transport chain, and which couples the oxidation of succinate to fumarate with the reduction of ubiquinone (coenzyme Q) to ubiquinol. Promotes maturation of the iron-sulfur protein subunit of the SDH catalytic dimer, protecting it from the deleterious effects of oxidants. May act together with SDHAF1. This Candida albicans (strain SC5314 / ATCC MYA-2876) (Yeast) protein is Succinate dehydrogenase assembly factor 3, mitochondrial.